We begin with the raw amino-acid sequence, 142 residues long: Large ribosomal subunit protein uL11 (142 aa).

It belongs to the universal ribosomal protein uL11 family. Part of the ribosomal stalk of the 50S ribosomal subunit. Interacts with L10 and the large rRNA to form the base of the stalk. L10 forms an elongated spine to which L12 dimers bind in a sequential fashion forming a multimeric L10(L12)X complex. Post-translationally, one or more lysine residues are methylated.

Forms part of the ribosomal stalk which helps the ribosome interact with GTP-bound translation factors. This is Large ribosomal subunit protein uL11 from Photorhabdus laumondii subsp. laumondii (strain DSM 15139 / CIP 105565 / TT01) (Photorhabdus luminescens subsp. laumondii).